An 803-amino-acid polypeptide reads, in one-letter code: Spondin-1 (803 aa).

A signal peptide spans 1 to 23 (MGLIFQPLFWQYVATSYALMVLG). The Reelin domain maps to 24 to 190 (FLDETVEKAI…DLTLEGGNEK (167 aa)). Intrachain disulfides connect Cys39-Cys124, Cys152-Cys178, Cys195-Cys331, Cys196-Cys335, Cys198-Cys409, Cys437-Cys474, Cys448-Cys483, Cys453-Cys488, Cys496-Cys532, Cys507-Cys511, Cys542-Cys548, Cys553-Cys589, Cys564-Cys568, and Cys599-Cys604. The region spanning 191 to 383 (TIPDCCACGT…LTSLDHPQSP (193 aa)) is the Spondin domain. N-linked (GlcNAc...) asparagine glycosylation occurs at Asn210. Ca(2+) contacts are provided by Asp320, Asp349, and Asp353. The interval 353–389 (DSGVTYESPNKPTIPQDKIRPLTSLDHPQSPSMTRGG) is disordered. Residues 354 to 365 (SGVTYESPNKPT) show a composition bias toward polar residues. TSP type-1 domains lie at 436-489 (TCIY…PGCS), 495-549 (TCMM…EECE), 552-605 (SCIV…PECH), 608-662 (PCVL…PECP), and 664-717 (SCEL…RKCQ). A glycan (N-linked (GlcNAc...) asparagine) is linked at Asn677. The disordered stretch occupies residues 722 to 741 (NERRHLKDAREKRRSEKIKE). The region spanning 750-802 (VCKMKPWTAWTECTKFCGGGIQERFMTVKKRFKSSQFTSCKDKKEIRACNVHP) is the TSP type-1 6 domain.

As to expression, expressed at high levels in the floor plate.

It localises to the secreted. The protein localises to the extracellular space. Its subcellular location is the extracellular matrix. In terms of biological role, promotes the attachment of spinal cord and sensory neuron cells and the outgrowth of neurites in vitro. May contribute to the growth and guidance of axons in both the spinal cord and the PNS. The protein is Spondin-1 (spon1) of Xenopus laevis (African clawed frog).